A 296-amino-acid chain; its full sequence is Bifunctional protein FolD (296 aa).

NADP(+)-binding positions include 168 to 170 (GRS), S197, and T238.

The protein belongs to the tetrahydrofolate dehydrogenase/cyclohydrolase family. Homodimer.

The catalysed reaction is (6R)-5,10-methylene-5,6,7,8-tetrahydrofolate + NADP(+) = (6R)-5,10-methenyltetrahydrofolate + NADPH. It catalyses the reaction (6R)-5,10-methenyltetrahydrofolate + H2O = (6R)-10-formyltetrahydrofolate + H(+). The protein operates within one-carbon metabolism; tetrahydrofolate interconversion. Its function is as follows. Catalyzes the oxidation of 5,10-methylenetetrahydrofolate to 5,10-methenyltetrahydrofolate and then the hydrolysis of 5,10-methenyltetrahydrofolate to 10-formyltetrahydrofolate. In Porphyromonas gingivalis (strain ATCC BAA-308 / W83), this protein is Bifunctional protein FolD.